The primary structure comprises 981 residues: Proline-rich transmembrane protein 3 (981 aa).

Residues 1-27 (MASSPWGCVCGLLLLLLPLLGTGPALG) form the signal peptide. The Extracellular portion of the chain corresponds to 28-474 (RGFPRPLENS…RVLSFSWELH (447 aa)). Disordered stretches follow at residues 43-107 (PGAH…GAQR) and 169-457 (PPSL…TAPP). The segment covering 65–85 (PRADSHRNSDVRHAPAEEMPE) has biased composition (basic and acidic residues). The tract at residues 297 to 302 (SWEVSS) is O-glycosylated at one site. O-linked (GalNAc...) serine glycosylation is present at Ser329. Over residues 331–340 (APDRPSKPER) the composition is skewed to basic and acidic residues. Thr363 carries O-linked (GalNAc...) threonine glycosylation. Residue Asn379 is glycosylated (N-linked (GlcNAc...) asparagine). The segment covering 411 to 427 (APSTSRRGLIRVTTQRA) has biased composition (polar residues). The span at 437-457 (TASSMASAPASSPPANATAPP) shows a compositional bias: low complexity. The helical transmembrane segment at 475-495 (VYGVGVLFLLPALLALAALAA) threads the bilayer. The Cytoplasmic segment spans residues 496-501 (APAGPR). The chain crosses the membrane as a helical span at residues 502-522 (LALVAAVLVLVASALRSAYML). Over 523-542 (TDPYGSQARLGVRGGLVLYN) the chain is Extracellular. The chain crosses the membrane as a helical span at residues 543–563 (LPFPLLLTALAALTLLGLGAG). Topologically, residues 564-570 (LPPPLQN) are cytoplasmic. A helical transmembrane segment spans residues 571 to 591 (PLLLGAVALVHGVGLLATDLL). Residues 592–598 (STWSVLN) are Extracellular-facing. A helical membrane pass occupies residues 599–619 (LLTQGLSCAWGAAVALGTLCL). Residues 620-638 (CRRRLLDGPRGWDASPGPR) lie on the Cytoplasmic side of the membrane. The helical transmembrane segment at 639–659 (LLAVAGALGLLASGLQLAAAL) threads the bilayer. At 660 to 679 (WLYPGPGRVGRFSWAWWGVH) the chain is on the extracellular side. The chain crosses the membrane as a helical span at residues 680–700 (FWLRLLELTWALALALAAVAA). The Cytoplasmic segment spans residues 701 to 981 (ARPRPPTEHA…RSASSDTIEL (281 aa)). Positions 759-807 (AESGQLATPSSGAWGSAASLGRGPQGGPGLSRNGVGPAPSLSELDLRPP) are disordered. Residues 765–780 (ATPSSGAWGSAASLGR) are compositionally biased toward low complexity. Ser777 carries the post-translational modification Phosphoserine. At Arg780 the chain carries Omega-N-methylarginine. Phosphoserine is present on residues Ser789, Ser798, Ser808, Ser815, Ser854, Ser874, Ser902, Ser903, and Ser911. The disordered stretch occupies residues 836–865 (LRGLASPPPGGALRPRRGSHPKAELDDAGS). The disordered stretch occupies residues 937 to 981 (TVQLLPAPTPAPDSTAARQGDGQGEVQPRGKPGESRSASSDTIEL). Residues 972 to 981 (RSASSDTIEL) are compositionally biased toward polar residues.

The protein resides in the membrane. This is Proline-rich transmembrane protein 3 (PRRT3) from Homo sapiens (Human).